A 369-amino-acid polypeptide reads, in one-letter code: Uroporphyrinogen decarboxylase (369 aa).

Substrate-binding positions include arginine 28 to arginine 32, aspartate 78, tyrosine 154, serine 209, and histidine 339.

This sequence belongs to the uroporphyrinogen decarboxylase family. In terms of assembly, homodimer.

It is found in the cytoplasm. The catalysed reaction is uroporphyrinogen III + 4 H(+) = coproporphyrinogen III + 4 CO2. It participates in porphyrin-containing compound metabolism; protoporphyrin-IX biosynthesis; coproporphyrinogen-III from 5-aminolevulinate: step 4/4. Its function is as follows. Catalyzes the decarboxylation of four acetate groups of uroporphyrinogen-III to yield coproporphyrinogen-III. This Polaromonas naphthalenivorans (strain CJ2) protein is Uroporphyrinogen decarboxylase.